Here is a 206-residue protein sequence, read N- to C-terminus: Ancillary SecYEG translocon subunit (206 aa).

The Cytoplasmic segment spans residues 1-23; that stretch reads MEIYENENDQVEAVKRFFAENGK. A helical membrane pass occupies residues 24-43; it reads ALAVGVILGVGALIGWRYWN. The Periplasmic segment spans residues 44–206; the sequence is SHQVDSARSA…MQMKINNLSI (163 aa).

Belongs to the YfgM family. In terms of assembly, interacts with the SecYEG translocon. Forms a complex with PpiD. Also interacts with RcsB.

It is found in the cell inner membrane. Its activity is regulated as follows. Is stable during exponential growth and degraded in stationary phase by the essential FtsH protease. Degradation is influenced by the alarmone (p)ppGpp, but not by inorganic polyphosphate (polyP), RpoS, RcsB or PpiD. Functionally, may mediate protein transfer from the SecYEG translocon to the periplasmic chaperone network via its periplasmic C-terminal region. In addition, at the cytosolic site, acts as a negative regulator of RcsB. In stationary phase, the FtsH-dependent degradation of YfgM ensures the release of RcsB from YfgM and thereby permits cellular protection by the Rcs phosphorelay system. May coordinate stress responses across the inner membrane via a dynamic protein-protein interaction network inside and outside of the membrane. The chain is Ancillary SecYEG translocon subunit (yfgM) from Escherichia coli (strain K12).